Consider the following 492-residue polypeptide: Bifunctional purine biosynthesis protein PurH (492 aa).

Positions 1–144 constitute an MGS-like domain; it reads MKKAILSVSN…KNYKHVTTIV (144 aa).

It belongs to the PurH family.

It carries out the reaction (6R)-10-formyltetrahydrofolate + 5-amino-1-(5-phospho-beta-D-ribosyl)imidazole-4-carboxamide = 5-formamido-1-(5-phospho-D-ribosyl)imidazole-4-carboxamide + (6S)-5,6,7,8-tetrahydrofolate. It catalyses the reaction IMP + H2O = 5-formamido-1-(5-phospho-D-ribosyl)imidazole-4-carboxamide. It functions in the pathway purine metabolism; IMP biosynthesis via de novo pathway; 5-formamido-1-(5-phospho-D-ribosyl)imidazole-4-carboxamide from 5-amino-1-(5-phospho-D-ribosyl)imidazole-4-carboxamide (10-formyl THF route): step 1/1. It participates in purine metabolism; IMP biosynthesis via de novo pathway; IMP from 5-formamido-1-(5-phospho-D-ribosyl)imidazole-4-carboxamide: step 1/1. The sequence is that of Bifunctional purine biosynthesis protein PurH from Staphylococcus aureus (strain JH1).